We begin with the raw amino-acid sequence, 530 residues long: ATP-dependent 6-phosphofructokinase 4, chloroplastic (530 aa).

The N-terminal 54 residues, 1 to 54 (MEASISFLGSTKPNISLFNPSSNVLPRRDFPLPALKLKKVSVLPRILHQKRLIR), are a transit peptide targeting the chloroplast. Phosphoserine is present on Ser121. ATP contacts are provided by residues Gly152, 215–216 (RG), and 240–243 (GGGT). Substrate contacts are provided by residues 269–271 (TID), 314–316 (MGR), Glu370, and 427–430 (YMIR). Catalysis depends on Asp271, which acts as the Proton acceptor.

It belongs to the phosphofructokinase type A (PFKA) family. PPi-dependent PFK group II subfamily. Atypical ATP-dependent clade 'X' sub-subfamily. In terms of assembly, homotetramer. The cofactor is Mg(2+). As to expression, expressed in leaves, stems and flowers.

The protein localises to the plastid. It localises to the chloroplast. It catalyses the reaction beta-D-fructose 6-phosphate + ATP = beta-D-fructose 1,6-bisphosphate + ADP + H(+). Its pathway is carbohydrate degradation; glycolysis; D-glyceraldehyde 3-phosphate and glycerone phosphate from D-glucose: step 3/4. With respect to regulation, allosterically activated by AMP. Functionally, catalyzes the phosphorylation of D-fructose 6-phosphate to fructose 1,6-bisphosphate by ATP, the first committing step of glycolysis. The sequence is that of ATP-dependent 6-phosphofructokinase 4, chloroplastic from Arabidopsis thaliana (Mouse-ear cress).